Reading from the N-terminus, the 172-residue chain is Translation initiation factor IF-3 (172 aa).

Belongs to the IF-3 family. As to quaternary structure, monomer.

It localises to the cytoplasm. IF-3 binds to the 30S ribosomal subunit and shifts the equilibrium between 70S ribosomes and their 50S and 30S subunits in favor of the free subunits, thus enhancing the availability of 30S subunits on which protein synthesis initiation begins. The protein is Translation initiation factor IF-3 of Campylobacter fetus subsp. fetus (strain 82-40).